Here is a 467-residue protein sequence, read N- to C-terminus: ATP-dependent protease ATPase subunit HslU (467 aa).

Residues isoleucine 18, 60 to 65 (GVGKTE), aspartate 280, glutamate 345, and arginine 417 each bind ATP.

This sequence belongs to the ClpX chaperone family. HslU subfamily. A double ring-shaped homohexamer of HslV is capped on each side by a ring-shaped HslU homohexamer. The assembly of the HslU/HslV complex is dependent on binding of ATP.

The protein localises to the cytoplasm. ATPase subunit of a proteasome-like degradation complex; this subunit has chaperone activity. The binding of ATP and its subsequent hydrolysis by HslU are essential for unfolding of protein substrates subsequently hydrolyzed by HslV. HslU recognizes the N-terminal part of its protein substrates and unfolds these before they are guided to HslV for hydrolysis. The protein is ATP-dependent protease ATPase subunit HslU of Lactobacillus helveticus (strain DPC 4571).